The chain runs to 305 residues: Ornithine carbamoyltransferase (305 aa).

Carbamoyl phosphate-binding positions include 52-55, glutamine 79, arginine 103, and 130-133; these read STRT and HPCQ. L-ornithine is bound by residues asparagine 161, aspartate 221, and 225–226; that span reads SM. Carbamoyl phosphate-binding positions include 261–262 and arginine 289; that span reads CL.

It belongs to the aspartate/ornithine carbamoyltransferase superfamily. OTCase family.

Its subcellular location is the cytoplasm. It carries out the reaction carbamoyl phosphate + L-ornithine = L-citrulline + phosphate + H(+). Its pathway is amino-acid biosynthesis; L-arginine biosynthesis; L-arginine from L-ornithine and carbamoyl phosphate: step 1/3. Reversibly catalyzes the transfer of the carbamoyl group from carbamoyl phosphate (CP) to the N(epsilon) atom of ornithine (ORN) to produce L-citrulline. The sequence is that of Ornithine carbamoyltransferase from Methanocorpusculum labreanum (strain ATCC 43576 / DSM 4855 / Z).